A 60-amino-acid polypeptide reads, in one-letter code: MADKKIKVTLVKSVIGTKQDHRATVKGLGLRKLNSSSELIDTPAVRGMIQKVQYLVKVEG.

It belongs to the universal ribosomal protein uL30 family. As to quaternary structure, part of the 50S ribosomal subunit.

This chain is Large ribosomal subunit protein uL30, found in Dechloromonas aromatica (strain RCB).